The following is a 353-amino-acid chain: MSAPLSLQTLVKKTVASTSCLSIDEHILKYCDLWWHDAPLKLYMDRGRIQIKSGFLGEDIDLCVALIIAVKENNYNLIKLFTELGANINYSLLSINTKHVRDLCRQLGAKETLEDYDIFCIFNKIMHNKTSGSVILCHEIFINNPNLENKFAAQLRRLIYKRLCGLIEIKETDELSELLVKYWYAKAVQYDYKDAICFLDEKYTDLNEWRLKCYLYYNKIYELHDIYHKEKIQIDVNEMLSLACIRDNNPLTIYYCYALGGNINQAMLTSVQYYNIGNIYFCIDLGGNAFEEGSAIARQKGYNFLSHSLVLNIYSSDASLPLNLKDPEEISSLLKNYKSKNLSIILDYSHNIL.

This sequence belongs to the asfivirus MGF 360 family.

In terms of biological role, plays a role in virus cell tropism, and may be required for efficient virus replication in macrophages. In African swine fever virus (isolate Tick/Malawi/Lil 20-1/1983) (ASFV), this protein is Protein MGF 360-13L.